Here is a 335-residue protein sequence, read N- to C-terminus: Phosphatidylglycerol--prolipoprotein diacylglyceryl transferase (335 aa).

Transmembrane regions (helical) follow at residues 31–51, 67–87, and 100–120; these read IYWY…TYSL, YIFL…LAIG, and LAIQ…FPLI. Arg163 provides a ligand contact to a 1,2-diacyl-sn-glycero-3-phospho-(1'-sn-glycerol). 3 helical membrane-spanning segments follow: residues 213 to 233, 235 to 255, and 277 to 297; these read PLFL…YFGL, YIKQ…YGVT, and SLLL…APLL.

Belongs to the Lgt family.

Its subcellular location is the cell membrane. The enzyme catalyses L-cysteinyl-[prolipoprotein] + a 1,2-diacyl-sn-glycero-3-phospho-(1'-sn-glycerol) = an S-1,2-diacyl-sn-glyceryl-L-cysteinyl-[prolipoprotein] + sn-glycerol 1-phosphate + H(+). Its pathway is protein modification; lipoprotein biosynthesis (diacylglyceryl transfer). Its function is as follows. Catalyzes the transfer of the diacylglyceryl group from phosphatidylglycerol to the sulfhydryl group of the N-terminal cysteine of a prolipoprotein, the first step in the formation of mature lipoproteins. This chain is Phosphatidylglycerol--prolipoprotein diacylglyceryl transferase, found in Ureaplasma parvum serovar 3 (strain ATCC 27815 / 27 / NCTC 11736).